We begin with the raw amino-acid sequence, 72 residues long: Defensin-like protein 35 (72 aa).

Residues 1-22 (MASNKISFSFVLCLYMCSLLDA) form the signal peptide. Cystine bridges form between Cys-32–Cys-58, Cys-44–Cys-67, and Cys-48–Cys-69.

Belongs to the DEFL family.

The protein resides in the secreted. The sequence is that of Defensin-like protein 35 from Arabidopsis thaliana (Mouse-ear cress).